Consider the following 164-residue polypeptide: MTLPSARTCFLLGFLFCAALLAAALYFQFSGGLEPCPLCISQRIMVLAVALVFLAAAIHHPASLGIRAYALLGTAVALGGASISGRHVWLLHLPPEEVPECGPGLSYMFRNFPLGDTLKAMLSGTGDCAKVDWTFLGLSMPAWVLICFLGLGAFSLLQWWNAER.

Residues 1-9 (MTLPSARTC) are Cytoplasmic-facing. Residues 10-26 (FLLGFLFCAALLAAALY) traverse the membrane as a helical segment. Residues 27-44 (FQFSGGLEPCPLCISQRI) are Periplasmic-facing. A disulfide bond links C36 and C39. A helical transmembrane segment spans residues 45–61 (MVLAVALVFLAAAIHHP). The Cytoplasmic segment spans residues 62–68 (ASLGIRA). The chain crosses the membrane as a helical span at residues 69-85 (YALLGTAVALGGASISG). Residues 86–142 (RHVWLLHLPPEEVPECGPGLSYMFRNFPLGDTLKAMLSGTGDCAKVDWTFLGLSMPA) lie on the Periplasmic side of the membrane. The cysteines at positions 101 and 128 are disulfide-linked. Residues 143 to 161 (WVLICFLGLGAFSLLQWWN) traverse the membrane as a helical segment. Over 162–164 (AER) the chain is Cytoplasmic.

The protein belongs to the DsbB family.

Its subcellular location is the cell inner membrane. In terms of biological role, required for disulfide bond formation in some periplasmic proteins. Acts by oxidizing the DsbA protein. In Methylococcus capsulatus (strain ATCC 33009 / NCIMB 11132 / Bath), this protein is Disulfide bond formation protein B.